Consider the following 453-residue polypeptide: F-box protein At4g27050 (453 aa).

In terms of domain architecture, F-box spans 3–51 (TDLISNLPDDVLGKILSLVPTKLAAATSVLSKRWRNLLPLVDSLDFDET).

As to quaternary structure, part of a SCF (ASK-cullin-F-box) protein ligase complex.

It functions in the pathway protein modification; protein ubiquitination. Functionally, component of SCF(ASK-cullin-F-box) E3 ubiquitin ligase complexes, which may mediate the ubiquitination and subsequent proteasomal degradation of target proteins. In Arabidopsis thaliana (Mouse-ear cress), this protein is F-box protein At4g27050.